Here is a 466-residue protein sequence, read N- to C-terminus: Glutamate decarboxylase alpha (466 aa).

2 residues coordinate substrate: Thr62 and Asn83. Pyridoxal 5'-phosphate contacts are provided by residues 126–127 (SS), Thr212, and His275. N6-(pyridoxal phosphate)lysine is present on Lys276.

It belongs to the group II decarboxylase family. Homohexamer. Pyridoxal 5'-phosphate serves as cofactor.

The catalysed reaction is L-glutamate + H(+) = 4-aminobutanoate + CO2. Converts glutamate to gamma-aminobutyrate (GABA), consuming one intracellular proton in the reaction. The gad system helps to maintain a near-neutral intracellular pH when cells are exposed to extremely acidic conditions. The ability to survive transit through the acidic conditions of the stomach is essential for successful colonization of the mammalian host by commensal and pathogenic bacteria. This Shigella flexneri protein is Glutamate decarboxylase alpha (gadA).